The chain runs to 322 residues: Thioredoxin reductase (322 aa).

Residues 11–14 (SGPA), 40–41 (IA), Gln45, Asn54, Val87, and Cys145 each bind FAD. A disulfide bond links Cys142 and Cys145. Ser192 is modified (phosphoserine). Residue Thr278 is modified to Phosphothreonine. Phosphoserine is present on Ser279. FAD-binding positions include Asp288 and 295 to 297 (RQA).

It belongs to the class-II pyridine nucleotide-disulfide oxidoreductase family. In terms of assembly, homodimer. The cofactor is FAD.

The protein localises to the cytoplasm. The enzyme catalyses [thioredoxin]-dithiol + NADP(+) = [thioredoxin]-disulfide + NADPH + H(+). The protein is Thioredoxin reductase (trr1) of Schizosaccharomyces pombe (strain 972 / ATCC 24843) (Fission yeast).